Here is an 85-residue protein sequence, read N- to C-terminus: Cell division topological specificity factor (85 aa).

This sequence belongs to the MinE family.

Its function is as follows. Prevents the cell division inhibition by proteins MinC and MinD at internal division sites while permitting inhibition at polar sites. This ensures cell division at the proper site by restricting the formation of a division septum at the midpoint of the long axis of the cell. In Stutzerimonas stutzeri (strain A1501) (Pseudomonas stutzeri), this protein is Cell division topological specificity factor.